We begin with the raw amino-acid sequence, 331 residues long: 6-phosphogluconolactonase (331 aa).

Lysine 287 bears the N6-acetyllysine mark.

This sequence belongs to the cycloisomerase 2 family.

The enzyme catalyses 6-phospho-D-glucono-1,5-lactone + H2O = 6-phospho-D-gluconate + H(+). Its pathway is carbohydrate degradation; pentose phosphate pathway; D-ribulose 5-phosphate from D-glucose 6-phosphate (oxidative stage): step 2/3. Catalyzes the hydrolysis of 6-phosphogluconolactone to 6-phosphogluconate. This is 6-phosphogluconolactonase from Escherichia coli O127:H6 (strain E2348/69 / EPEC).